Consider the following 277-residue polypeptide: Trypsin-2 (277 aa).

An N-terminal signal peptide occupies residues 1-19; that stretch reads MSNKIAILLLAVVVAVVAC. Positions 20–50 are cleaved as a propeptide — activation peptide; it reads AQAQPSRRHHLVHPLLPRFLPRLHRDSNGHR. A Peptidase S1 domain is found at 51–276; that stretch reads VVGGFQIDVS…VRDWVRENSG (226 aa). Residues C76 and C92 are joined by a disulfide bond. Residues H91 and D136 each act as charge relay system in the active site. Cystine bridges form between C201/C217 and C228/C252. The Charge relay system role is filled by S232.

It belongs to the peptidase S1 family. As to expression, midgut.

Its subcellular location is the secreted. The catalysed reaction is Preferential cleavage: Arg-|-Xaa, Lys-|-Xaa.. Major function may be to aid in digestion of the blood meal. This is Trypsin-2 (TRYP2) from Anopheles gambiae (African malaria mosquito).